A 524-amino-acid polypeptide reads, in one-letter code: Importin subunit alpha-1 (524 aa).

Residues methionine 1–arginine 42 form a disordered region. Residues methionine 1–serine 59 form the IBB domain.

This sequence belongs to the importin alpha family. As to quaternary structure, forms a complex with an importin beta subunit. Adult germline tissues.

The protein localises to the cytoplasm. In terms of biological role, binds specifically and directly to substrates containing either a simple or bipartite NLS motif. Promotes docking of import substrates to the nuclear envelope. Seems to act as a cytosolic receptor for both simple and bipartite NLS motifs. This chain is Importin subunit alpha-1 (ima-1), found in Caenorhabditis elegans.